A 425-amino-acid chain; its full sequence is Serine--tRNA ligase (425 aa).

An L-serine-binding site is contributed by 233-235 (TAE). 264-266 (RRE) provides a ligand contact to ATP. Residue glutamate 287 participates in L-serine binding. An ATP-binding site is contributed by 351 to 354 (EISS). Residue serine 387 coordinates L-serine.

The protein belongs to the class-II aminoacyl-tRNA synthetase family. Type-1 seryl-tRNA synthetase subfamily. In terms of assembly, homodimer. The tRNA molecule binds across the dimer.

The protein localises to the cytoplasm. It carries out the reaction tRNA(Ser) + L-serine + ATP = L-seryl-tRNA(Ser) + AMP + diphosphate + H(+). It catalyses the reaction tRNA(Sec) + L-serine + ATP = L-seryl-tRNA(Sec) + AMP + diphosphate + H(+). Its pathway is aminoacyl-tRNA biosynthesis; selenocysteinyl-tRNA(Sec) biosynthesis; L-seryl-tRNA(Sec) from L-serine and tRNA(Sec): step 1/1. Its function is as follows. Catalyzes the attachment of serine to tRNA(Ser). Is also able to aminoacylate tRNA(Sec) with serine, to form the misacylated tRNA L-seryl-tRNA(Sec), which will be further converted into selenocysteinyl-tRNA(Sec). The protein is Serine--tRNA ligase of Thermotoga sp. (strain RQ2).